Reading from the N-terminus, the 292-residue chain is Sulfhydrogenase 1 subunit gamma (292 aa).

The FAD-binding FR-type domain maps to 15 to 115 (YALHRVKVLK…RGPYGNGFPV (101 aa)). Residues cysteine 253, cysteine 258, cysteine 261, and cysteine 273 each coordinate [2Fe-2S] cluster.

As to quaternary structure, heterotetramer of alpha, beta, gamma and delta subunits. The nickel-containing alpha and delta subunits constitute the hydrogenase activity. The beta and gamma subunits (flavin-containing dimer) constitute the sulfur reductase activity. Requires FAD as cofactor. It depends on [2Fe-2S] cluster as a cofactor.

It localises to the cytoplasm. It carries out the reaction n sulfur + H2 = (n-1) sulfur + hydrogen sulfide + H(+). With respect to regulation, stimulated by rubredoxin at pH 7.6 but not ferredoxin. Its function is as follows. Part of a bifunctional enzyme complex that functions as an NADPH-dependent hydrogen-evolving hydrogenase with sulfur reducing activity. May play a role in hydrogen cycling during fermentative growth. Activity not exhibited with NAD. The beta and gamma subunits form the sulfur reducing component that catalyzes the cytoplasmic production of hydrogen sulfide in the presence of elemental sulfur. Not active in the presence of sodium sulfate, sodium sulfite, sodium thiosulfate or cysteine. This chain is Sulfhydrogenase 1 subunit gamma, found in Pyrococcus furiosus (strain ATCC 43587 / DSM 3638 / JCM 8422 / Vc1).